The following is a 910-amino-acid chain: Protein translocase subunit SecA (910 aa).

ATP contacts are provided by residues glutamine 86, glycine 104–threonine 108, and aspartate 499. Cysteine 894, cysteine 896, cysteine 905, and histidine 906 together coordinate Zn(2+).

It belongs to the SecA family. In terms of assembly, monomer and homodimer. Part of the essential Sec protein translocation apparatus which comprises SecA, SecYEG and auxiliary proteins SecDF-YajC and YidC. Zn(2+) serves as cofactor.

The protein resides in the cell inner membrane. The protein localises to the cytoplasm. The catalysed reaction is ATP + H2O + cellular proteinSide 1 = ADP + phosphate + cellular proteinSide 2.. Functionally, part of the Sec protein translocase complex. Interacts with the SecYEG preprotein conducting channel. Has a central role in coupling the hydrolysis of ATP to the transfer of proteins into and across the cell membrane, serving both as a receptor for the preprotein-SecB complex and as an ATP-driven molecular motor driving the stepwise translocation of polypeptide chains across the membrane. The sequence is that of Protein translocase subunit SecA from Rickettsia bellii (strain RML369-C).